A 342-amino-acid chain; its full sequence is uncharacterized protein (342 aa).

It belongs to the cycloisomerase 2 family.

This is an uncharacterized protein from Staphylococcus aureus (strain MSSA476).